The following is a 464-amino-acid chain: DNA primase DnaG (464 aa).

Residues 171–245 form the Toprim domain; sequence DTIIIVEGRA…DIDYVARAPK (75 aa). Residues glutamate 177, aspartate 219, and aspartate 221 each contribute to the Mg(2+) site.

Belongs to the archaeal DnaG primase family. In terms of assembly, forms a ternary complex with MCM helicase and DNA. Requires Mg(2+) as cofactor.

The catalysed reaction is ssDNA + n NTP = ssDNA/pppN(pN)n-1 hybrid + (n-1) diphosphate.. Functionally, RNA polymerase that catalyzes the synthesis of short RNA molecules used as primers for DNA polymerase during DNA replication. The polypeptide is DNA primase DnaG (Methanococcus aeolicus (strain ATCC BAA-1280 / DSM 17508 / OCM 812 / Nankai-3)).